Consider the following 551-residue polypeptide: Calnexin (551 aa).

The signal sequence occupies residues 1–23 (MRPQNVAGVAGTGALIMAAGALA). At 24–477 (DQTVFHPTSL…QAIKQMPEVA (454 aa)) the chain is on the lumenal side. The segment at 293-315 (EEEPETIPDPEAEKPEEWDDEED) is disordered. A helical membrane pass occupies residues 478 to 498 (AGLAAAVFTLLGMLLALFGFI). Residues 499-551 (GSAPTKVKQTTVKTKAVAPVAPAGEEEKKALDQAGVEIPAEGSKKRVTRSTKE) are Cytoplasmic-facing. Residues 526-551 (KKALDQAGVEIPAEGSKKRVTRSTKE) form a disordered region.

Belongs to the calreticulin family.

The protein localises to the endoplasmic reticulum membrane. Endoplasmic reticulum (ER) chaperone that functions to stabilize non-native glycoproteins and retain them in the ER until they are properly folded or targeted for ER associated degradation (ERAD). With co-chaperone DNJ1, coordinately maintains ER homeostasis and contributes to maintenance of cell wall architecture. This is Calnexin from Cryptococcus neoformans var. grubii serotype A (strain H99 / ATCC 208821 / CBS 10515 / FGSC 9487) (Filobasidiella neoformans var. grubii).